We begin with the raw amino-acid sequence, 223 residues long: UPF0502 protein Shew185_1758 (223 aa).

It belongs to the UPF0502 family.

This Shewanella baltica (strain OS185) protein is UPF0502 protein Shew185_1758.